Here is a 488-residue protein sequence, read N- to C-terminus: Poly(3-hydroxybutyrate) depolymerase (488 aa).

Positions 1-27 (MVRRLWRRIAGWLAACVAILCAFPLHA) are cleaved as a signal peptide. Serine 166 serves as the catalytic Charge relay system. One can recognise a Fibronectin type-III domain in the interval 346–428 (APTGLAVTAT…AAVSATTKSA (83 aa)).

It belongs to the AB hydrolase superfamily. Lipase family.

Its subcellular location is the secreted. The enzyme catalyses [(3R)-hydroxybutanoate](n) + H2O = [(3R)-hydroxybutanoate](n-2) + (3R)-hydroxybutanoate dimer + H(+). The catalysed reaction is [(3R)-hydroxybutanoate](n) + H2O = [(3R)-hydroxybutanoate](n-3) + (3R)-hydroxybutanoate trimer + H(+). It catalyses the reaction [(3R)-hydroxybutanoate](n) + H2O = [(3R)-hydroxybutanoate](n-1) + (R)-3-hydroxybutanoate + H(+). It carries out the reaction [(3R)-hydroxybutanoate](n) + H2O = [(3R)-hydroxybutanoate](n-5) + (3R)-hydroxybutanoate pentamer + H(+). The enzyme catalyses [(3R)-hydroxybutanoate](n) + H2O = [(3R)-hydroxybutanoate](n-4) + (3R)-hydroxybutanoate tetramer + H(+). Its function is as follows. This protein degrades water-insoluble and water-soluble PHB to monomeric D(-)-3-hydroxybutyrate. This chain is Poly(3-hydroxybutyrate) depolymerase, found in Ralstonia pickettii (Burkholderia pickettii).